The chain runs to 289 residues: ATP synthase gamma chain (289 aa).

The protein belongs to the ATPase gamma chain family. As to quaternary structure, F-type ATPases have 2 components, CF(1) - the catalytic core - and CF(0) - the membrane proton channel. CF(1) has five subunits: alpha(3), beta(3), gamma(1), delta(1), epsilon(1). CF(0) has three main subunits: a, b and c.

It localises to the cell inner membrane. Produces ATP from ADP in the presence of a proton gradient across the membrane. The gamma chain is believed to be important in regulating ATPase activity and the flow of protons through the CF(0) complex. This Cereibacter sphaeroides (strain ATCC 17025 / ATH 2.4.3) (Rhodobacter sphaeroides) protein is ATP synthase gamma chain.